The following is a 432-amino-acid chain: Ornithine decarboxylase 1A, chloroplastic (432 aa).

Position 95 is an N6-(pyridoxal phosphate)lysine (lysine 95). Residues serine 227, glycine 265, and 298–301 (EPGR) each bind pyridoxal 5'-phosphate. 341–342 (YD) provides a ligand contact to substrate. Cysteine 377 functions as the Proton donor; shared with dimeric partner in the catalytic mechanism. Residue aspartate 378 coordinates substrate. Tyrosine 406 provides a ligand contact to pyridoxal 5'-phosphate.

This sequence belongs to the Orn/Lys/Arg decarboxylase class-II family. As to quaternary structure, homodimer. Only the dimer is catalytically active, as the active sites are constructed of residues from both monomers. The cofactor is pyridoxal 5'-phosphate.

Its subcellular location is the plastid. It is found in the chloroplast. The catalysed reaction is L-ornithine + H(+) = putrescine + CO2. The protein operates within alkaloid biosynthesis; nicotine biosynthesis. It functions in the pathway amine and polyamine biosynthesis; putrescine biosynthesis via L-ornithine pathway; putrescine from L-ornithine: step 1/1. Its function is as follows. Involved in the biosynthesis of pyridine alkaloid natural products, leading mainly to the production of anabasine, anatabine, nicotine and nornicotine, effective deterrents against herbivores with antiparasitic and pesticide properties (neurotoxins); nornicotine serves as the precursor in the synthesis of the carcinogen compound N'-nitrosonornicotine (NNN). Catalyzes the first and rate-limiting step of polyamine biosynthesis that converts ornithine into putrescine, which is the precursor for the polyamines, spermidine and spermine. Polyamines are essential for cell proliferation and are implicated in cellular processes, ranging from DNA replication to apoptosis. This is Ornithine decarboxylase 1A, chloroplastic from Nicotiana tabacum (Common tobacco).